A 269-amino-acid chain; its full sequence is tRNA uridine(34) hydroxylase (269 aa).

The region spanning 121-214 (SQPDVLVIDT…YLERTHNKNG (94 aa)) is the Rhodanese domain. Cysteine 174 (cysteine persulfide intermediate) is an active-site residue.

The protein belongs to the TrhO family.

The enzyme catalyses uridine(34) in tRNA + AH2 + O2 = 5-hydroxyuridine(34) in tRNA + A + H2O. Its function is as follows. Catalyzes oxygen-dependent 5-hydroxyuridine (ho5U) modification at position 34 in tRNAs. This Wolbachia sp. subsp. Brugia malayi (strain TRS) protein is tRNA uridine(34) hydroxylase.